Reading from the N-terminus, the 246-residue chain is UDP-2,3-diacylglucosamine hydrolase (246 aa).

Positions 8, 10, 41, 79, and 114 each coordinate Mn(2+). 79-80 lines the substrate pocket; the sequence is NR. Positions 122, 160, 164, 167, and 195 each coordinate substrate. Mn(2+)-binding residues include histidine 195 and histidine 197.

The protein belongs to the LpxH family. Mn(2+) is required as a cofactor.

It localises to the cell inner membrane. It catalyses the reaction UDP-2-N,3-O-bis[(3R)-3-hydroxytetradecanoyl]-alpha-D-glucosamine + H2O = 2-N,3-O-bis[(3R)-3-hydroxytetradecanoyl]-alpha-D-glucosaminyl 1-phosphate + UMP + 2 H(+). It functions in the pathway glycolipid biosynthesis; lipid IV(A) biosynthesis; lipid IV(A) from (3R)-3-hydroxytetradecanoyl-[acyl-carrier-protein] and UDP-N-acetyl-alpha-D-glucosamine: step 4/6. In terms of biological role, hydrolyzes the pyrophosphate bond of UDP-2,3-diacylglucosamine to yield 2,3-diacylglucosamine 1-phosphate (lipid X) and UMP by catalyzing the attack of water at the alpha-P atom. Involved in the biosynthesis of lipid A, a phosphorylated glycolipid that anchors the lipopolysaccharide to the outer membrane of the cell. This is UDP-2,3-diacylglucosamine hydrolase from Tolumonas auensis (strain DSM 9187 / NBRC 110442 / TA 4).